Reading from the N-terminus, the 140-residue chain is Large ribosomal subunit protein bL17 (140 aa).

The protein belongs to the bacterial ribosomal protein bL17 family. As to quaternary structure, part of the 50S ribosomal subunit. Contacts protein L32.

The polypeptide is Large ribosomal subunit protein bL17 (Methylobacterium nodulans (strain LMG 21967 / CNCM I-2342 / ORS 2060)).